We begin with the raw amino-acid sequence, 340 residues long: Protein-lysine N-methyltransferase EEF2KMT (340 aa).

Met1 bears the N-acetylmethionine mark. S-adenosyl-L-methionine-binding positions include Trp139, 165 to 167 (GSG), Trp238, and Ala257.

Belongs to the class I-like SAM-binding methyltransferase superfamily. EEF2KMT family. Interacts with FAM86B2 and FAM86C1P.

Its subcellular location is the cytoplasm. It catalyses the reaction L-lysyl-[protein] + 3 S-adenosyl-L-methionine = N(6),N(6),N(6)-trimethyl-L-lysyl-[protein] + 3 S-adenosyl-L-homocysteine + 3 H(+). Catalyzes the trimethylation of eukaryotic elongation factor 2 (EEF2) on 'Lys-525'. In Bos taurus (Bovine), this protein is Protein-lysine N-methyltransferase EEF2KMT (EEF2KMT).